A 159-amino-acid polypeptide reads, in one-letter code: MSGAGVPDMPALHAEDVTLAIVASTWHETICDALLDGARKVAEQAGVTDPTVVRVLGAIEIPVVAQALARTHDAVIALGVVIRGETPHFDYVCDAVTQGLTRVSLDASTPVANGVLTVNTENQALDRAGLPNSAEDKGAQAAAAALSTALTLRQLASPS.

Residues Trp-26, 58–60 (AIE), and 80–82 (VVI) each bind 5-amino-6-(D-ribitylamino)uracil. 85–86 (ET) contributes to the (2S)-2-hydroxy-3-oxobutyl phosphate binding site. His-88 acts as the Proton donor in catalysis. Asn-113 lines the 5-amino-6-(D-ribitylamino)uracil pocket. Residue Arg-127 participates in (2S)-2-hydroxy-3-oxobutyl phosphate binding.

This sequence belongs to the DMRL synthase family. In terms of assembly, homopentamer.

The catalysed reaction is (2S)-2-hydroxy-3-oxobutyl phosphate + 5-amino-6-(D-ribitylamino)uracil = 6,7-dimethyl-8-(1-D-ribityl)lumazine + phosphate + 2 H2O + H(+). The protein operates within cofactor biosynthesis; riboflavin biosynthesis; riboflavin from 2-hydroxy-3-oxobutyl phosphate and 5-amino-6-(D-ribitylamino)uracil: step 1/2. Functionally, catalyzes the formation of 6,7-dimethyl-8-ribityllumazine by condensation of 5-amino-6-(D-ribitylamino)uracil with 3,4-dihydroxy-2-butanone 4-phosphate. This is the penultimate step in the biosynthesis of riboflavin. In Mycolicibacterium gilvum (strain PYR-GCK) (Mycobacterium gilvum (strain PYR-GCK)), this protein is 6,7-dimethyl-8-ribityllumazine synthase.